Reading from the N-terminus, the 1589-residue chain is Mediator of RNA polymerase II transcription subunit 23 (1589 aa).

Positions 1381–1499 (YVSQNEPAPP…PPTPAPMHHQ (119 aa)) are disordered. The segment covering 1392 to 1410 (TPEREKTPERKDQQKEQQE) has biased composition (basic and acidic residues). The segment covering 1457 to 1470 (LHHQQQQQQHLSQM) has biased composition (low complexity).

Belongs to the Mediator complex subunit 23 family. In terms of assembly, component of the Mediator complex.

The protein localises to the nucleus. Functionally, component of the Mediator complex, a coactivator involved in the regulated transcription of nearly all RNA polymerase II-dependent genes. Mediator functions as a bridge to convey information from gene-specific regulatory proteins to the basal RNA polymerase II transcription machinery. Mediator is recruited to promoters by direct interactions with regulatory proteins and serves as a scaffold for the assembly of a functional preinitiation complex with RNA polymerase II and the general transcription factors. This is Mediator of RNA polymerase II transcription subunit 23 (sur-2) from Caenorhabditis briggsae.